Reading from the N-terminus, the 210-residue chain is Prolactin-2 (210 aa).

Residues 1-23 (MARRSQGTKLHLAVLCLVVSCHA) form the signal peptide. Disulfide bonds link Cys-69-Cys-183 and Cys-200-Cys-210.

The protein belongs to the somatotropin/prolactin family.

The protein resides in the secreted. The sequence is that of Prolactin-2 (prl2) from Oncorhynchus keta (Chum salmon).